A 418-amino-acid chain; its full sequence is UDP-N-acetylglucosamine 1-carboxyvinyltransferase (418 aa).

Phosphoenolpyruvate is bound at residue 22-23; sequence KN. R91 lines the UDP-N-acetyl-alpha-D-glucosamine pocket. C115 (proton donor) is an active-site residue. 2-(S-cysteinyl)pyruvic acid O-phosphothioketal is present on C115. The UDP-N-acetyl-alpha-D-glucosamine site is built by D305 and I327.

It belongs to the EPSP synthase family. MurA subfamily.

The protein localises to the cytoplasm. The catalysed reaction is phosphoenolpyruvate + UDP-N-acetyl-alpha-D-glucosamine = UDP-N-acetyl-3-O-(1-carboxyvinyl)-alpha-D-glucosamine + phosphate. Its pathway is cell wall biogenesis; peptidoglycan biosynthesis. Functionally, cell wall formation. Adds enolpyruvyl to UDP-N-acetylglucosamine. This chain is UDP-N-acetylglucosamine 1-carboxyvinyltransferase, found in Aeromonas salmonicida (strain A449).